The sequence spans 426 residues: Histidine--tRNA ligase (426 aa).

It belongs to the class-II aminoacyl-tRNA synthetase family. As to quaternary structure, homodimer.

The protein resides in the cytoplasm. The enzyme catalyses tRNA(His) + L-histidine + ATP = L-histidyl-tRNA(His) + AMP + diphosphate + H(+). The polypeptide is Histidine--tRNA ligase (Legionella pneumophila subsp. pneumophila (strain Philadelphia 1 / ATCC 33152 / DSM 7513)).